A 311-amino-acid chain; its full sequence is Protoheme IX farnesyltransferase (311 aa).

Helical transmembrane passes span 38–58, 62–82, 113–133, 134–154, 162–182, 188–208, 230–250, 251–271, and 286–306; these read IKVV…APDM, YFVQ…AAVI, LIFS…AANW, LTAQ…TMFL, IVIG…SETG, PWIL…ALAI, FTKT…FLPF, LIHM…IIFI, and ALNL…ALFA.

This sequence belongs to the UbiA prenyltransferase family. Protoheme IX farnesyltransferase subfamily.

The protein resides in the cell inner membrane. The catalysed reaction is heme b + (2E,6E)-farnesyl diphosphate + H2O = Fe(II)-heme o + diphosphate. Its pathway is porphyrin-containing compound metabolism; heme O biosynthesis; heme O from protoheme: step 1/1. Its function is as follows. Converts heme B (protoheme IX) to heme O by substitution of the vinyl group on carbon 2 of heme B porphyrin ring with a hydroxyethyl farnesyl side group. The polypeptide is Protoheme IX farnesyltransferase (Psychromonas ingrahamii (strain DSM 17664 / CCUG 51855 / 37)).